Reading from the N-terminus, the 538-residue chain is Cytochrome c-552 (538 aa).

Positions 1–55 are cleaved as a signal peptide; that stretch reads MKIYLRFVWILIIILNFLLNLFITTNGVIIVNAFKKSLIVAASFASLSLFNSATA. Residue His133 participates in heme c binding. The heme site is built by Cys161, Cys164, and Lys165. Residues Cys199, Cys202, His203, Cys264, Cys267, and His268 each contribute to the heme c site. Ca(2+)-binding residues include Glu270, Tyr271, Lys316, and Gln318. Residue Tyr271 coordinates substrate. His319 serves as a coordination point for substrate. His330, Cys337, Cys340, His341, His356, Cys369, Cys372, His373, and His448 together coordinate heme c.

It belongs to the cytochrome c-552 family. Requires Ca(2+) as cofactor. Heme c serves as cofactor.

It localises to the periplasm. The enzyme catalyses 6 Fe(III)-[cytochrome c] + NH4(+) + 2 H2O = 6 Fe(II)-[cytochrome c] + nitrite + 8 H(+). The protein operates within nitrogen metabolism; nitrate reduction (assimilation). In terms of biological role, catalyzes the reduction of nitrite to ammonia, consuming six electrons in the process. In Haemophilus influenzae (strain ATCC 51907 / DSM 11121 / KW20 / Rd), this protein is Cytochrome c-552.